Consider the following 286-residue polypeptide: Nucleotide-binding protein PSPA7_5038 (286 aa).

8–15 (GRSGSGKS) is a binding site for ATP. Position 60–63 (60–63 (DARN)) interacts with GTP.

This sequence belongs to the RapZ-like family.

In terms of biological role, displays ATPase and GTPase activities. The sequence is that of Nucleotide-binding protein PSPA7_5038 from Pseudomonas paraeruginosa (strain DSM 24068 / PA7) (Pseudomonas aeruginosa (strain PA7)).